We begin with the raw amino-acid sequence, 99 residues long: Transposase InsE for insertion sequence IS3A (99 aa).

The segment at Met1–Ser21 is disordered.

It belongs to the transposase 8 family.

Functionally, involved in the transposition of the insertion sequence IS3. The protein is Transposase InsE for insertion sequence IS3A (insE1) of Escherichia coli (strain K12).